The following is a 450-amino-acid chain: Tubulin alpha-2 chain (450 aa).

Glutamine 11, glutamate 71, glycine 144, threonine 145, threonine 179, asparagine 206, and asparagine 228 together coordinate GTP. Glutamate 71 contacts Mg(2+). Glutamate 254 is an active-site residue. Threonine 349 is modified (phosphothreonine). Positions 430–450 are disordered; sequence KDYEEVGAEGGDDEDDEGEEY. The segment covering 431–450 has biased composition (acidic residues); sequence DYEEVGAEGGDDEDDEGEEY.

The protein belongs to the tubulin family. In terms of assembly, dimer of alpha and beta chains. A typical microtubule is a hollow water-filled tube with an outer diameter of 25 nm and an inner diameter of 15 nM. Alpha-beta heterodimers associate head-to-tail to form protofilaments running lengthwise along the microtubule wall with the beta-tubulin subunit facing the microtubule plus end conferring a structural polarity. Microtubules usually have 13 protofilaments but different protofilament numbers can be found in some organisms and specialized cells. It depends on Mg(2+) as a cofactor. Post-translationally, undergoes a tyrosination/detyrosination cycle, the cyclic removal and re-addition of a C-terminal tyrosine residue by the enzymes tubulin tyrosine carboxypeptidase (TTCP) and tubulin tyrosine ligase (TTL), respectively. In terms of processing, acetylation of alpha chains at Lys-40 stabilizes microtubules and affects affinity and processivity of microtubule motors. This modification has a role in multiple cellular functions, ranging from cell motility, cell cycle progression or cell differentiation to intracellular trafficking and signaling.

The protein resides in the cytoplasm. It localises to the cytoskeleton. The catalysed reaction is GTP + H2O = GDP + phosphate + H(+). Functionally, tubulin is the major constituent of microtubules, a cylinder consisting of laterally associated linear protofilaments composed of alpha- and beta-tubulin heterodimers. Microtubules grow by the addition of GTP-tubulin dimers to the microtubule end, where a stabilizing cap forms. Below the cap, tubulin dimers are in GDP-bound state, owing to GTPase activity of alpha-tubulin. The chain is Tubulin alpha-2 chain (TUBA2) from Arabidopsis thaliana (Mouse-ear cress).